Here is a 542-residue protein sequence, read N- to C-terminus: CTP synthase (542 aa).

The tract at residues 1 to 265 (MTRYVFITGG…DREVLALFGI (265 aa)) is amidoligase domain. A CTP-binding site is contributed by S13. S13 lines the UTP pocket. ATP-binding positions include 14–19 (SLGKGL) and D71. Residues D71 and E139 each contribute to the Mg(2+) site. Residues 146–148 (DIE), 186–191 (KTKPTQ), and K222 contribute to the CTP site. UTP-binding positions include 186–191 (KTKPTQ) and K222. Residue 238 to 240 (RDV) coordinates ATP. A Glutamine amidotransferase type-1 domain is found at 291 to 541 (SIAIVGKYTG…IGAAVVQSRL (251 aa)). Residue G353 participates in L-glutamine binding. Residue C380 is the Nucleophile; for glutamine hydrolysis of the active site. Residues 381–384 (FGMQ), E404, and R469 each bind L-glutamine. Active-site residues include H514 and E516.

The protein belongs to the CTP synthase family. Homotetramer.

It carries out the reaction UTP + L-glutamine + ATP + H2O = CTP + L-glutamate + ADP + phosphate + 2 H(+). It catalyses the reaction L-glutamine + H2O = L-glutamate + NH4(+). The catalysed reaction is UTP + NH4(+) + ATP = CTP + ADP + phosphate + 2 H(+). It participates in pyrimidine metabolism; CTP biosynthesis via de novo pathway; CTP from UDP: step 2/2. Its activity is regulated as follows. Allosterically activated by GTP, when glutamine is the substrate; GTP has no effect on the reaction when ammonia is the substrate. The allosteric effector GTP functions by stabilizing the protein conformation that binds the tetrahedral intermediate(s) formed during glutamine hydrolysis. Inhibited by the product CTP, via allosteric rather than competitive inhibition. In terms of biological role, catalyzes the ATP-dependent amination of UTP to CTP with either L-glutamine or ammonia as the source of nitrogen. Regulates intracellular CTP levels through interactions with the four ribonucleotide triphosphates. This is CTP synthase from Methylobacterium nodulans (strain LMG 21967 / CNCM I-2342 / ORS 2060).